A 559-amino-acid chain; its full sequence is Formate--tetrahydrofolate ligase (559 aa).

Residue 68 to 75 (TPAGEGKT) coordinates ATP.

The protein belongs to the formate--tetrahydrofolate ligase family.

It carries out the reaction (6S)-5,6,7,8-tetrahydrofolate + formate + ATP = (6R)-10-formyltetrahydrofolate + ADP + phosphate. The protein operates within one-carbon metabolism; tetrahydrofolate interconversion. The sequence is that of Formate--tetrahydrofolate ligase from Rhizobium johnstonii (strain DSM 114642 / LMG 32736 / 3841) (Rhizobium leguminosarum bv. viciae).